We begin with the raw amino-acid sequence, 457 residues long: Siroheme synthase (457 aa).

The precorrin-2 dehydrogenase /sirohydrochlorin ferrochelatase stretch occupies residues 4 to 202 (LPIFCQLRDR…ANADEKAVNA (199 aa)). Residues 22–23 (DV) and 43–44 (LT) each bind NAD(+). Serine 128 is subject to Phosphoserine. Residues 216-448 (GEVVLVGAGP…IIVGRVVALR (233 aa)) are uroporphyrinogen-III C-methyltransferase. Proline 225 provides a ligand contact to S-adenosyl-L-methionine. The active-site Proton acceptor is the aspartate 248. The Proton donor role is filled by lysine 270. S-adenosyl-L-methionine contacts are provided by residues 301–303 (GGD), isoleucine 306, 331–332 (TA), methionine 382, glycine 411, and alanine 437.

The protein in the N-terminal section; belongs to the precorrin-2 dehydrogenase / sirohydrochlorin ferrochelatase family. This sequence in the C-terminal section; belongs to the precorrin methyltransferase family. In terms of assembly, homodimer.

It catalyses the reaction uroporphyrinogen III + 2 S-adenosyl-L-methionine = precorrin-2 + 2 S-adenosyl-L-homocysteine + H(+). The enzyme catalyses precorrin-2 + NAD(+) = sirohydrochlorin + NADH + 2 H(+). It carries out the reaction siroheme + 2 H(+) = sirohydrochlorin + Fe(2+). Its pathway is cofactor biosynthesis; adenosylcobalamin biosynthesis; precorrin-2 from uroporphyrinogen III: step 1/1. It participates in cofactor biosynthesis; adenosylcobalamin biosynthesis; sirohydrochlorin from precorrin-2: step 1/1. The protein operates within porphyrin-containing compound metabolism; siroheme biosynthesis; precorrin-2 from uroporphyrinogen III: step 1/1. It functions in the pathway porphyrin-containing compound metabolism; siroheme biosynthesis; siroheme from sirohydrochlorin: step 1/1. Its pathway is porphyrin-containing compound metabolism; siroheme biosynthesis; sirohydrochlorin from precorrin-2: step 1/1. In terms of biological role, multifunctional enzyme that catalyzes the SAM-dependent methylations of uroporphyrinogen III at position C-2 and C-7 to form precorrin-2 via precorrin-1. Then it catalyzes the NAD-dependent ring dehydrogenation of precorrin-2 to yield sirohydrochlorin. Finally, it catalyzes the ferrochelation of sirohydrochlorin to yield siroheme. This Salmonella typhimurium (strain LT2 / SGSC1412 / ATCC 700720) protein is Siroheme synthase.